The primary structure comprises 151 residues: Deoxyuridine 5'-triphosphate nucleotidohydrolase (151 aa).

Substrate contacts are provided by residues 70–72, Asn-83, 87–89, and Met-97; these read RSG and LID.

Belongs to the dUTPase family. Mg(2+) is required as a cofactor.

The enzyme catalyses dUTP + H2O = dUMP + diphosphate + H(+). The protein operates within pyrimidine metabolism; dUMP biosynthesis; dUMP from dCTP (dUTP route): step 2/2. This enzyme is involved in nucleotide metabolism: it produces dUMP, the immediate precursor of thymidine nucleotides and it decreases the intracellular concentration of dUTP so that uracil cannot be incorporated into DNA. This is Deoxyuridine 5'-triphosphate nucleotidohydrolase from Psychromonas ingrahamii (strain DSM 17664 / CCUG 51855 / 37).